A 123-amino-acid chain; its full sequence is Small ribosomal subunit protein uS12 (123 aa).

Residues 1 to 30 form a disordered region; it reads MPTIQQLIRKPRQPKVQRSKSQHLQSCPQK. Over residues 9-21 the composition is skewed to basic residues; the sequence is RKPRQPKVQRSKS. Residue Asp89 is modified to 3-methylthioaspartic acid.

This sequence belongs to the universal ribosomal protein uS12 family. Part of the 30S ribosomal subunit. Contacts proteins S8 and S17. May interact with IF1 in the 30S initiation complex.

In terms of biological role, with S4 and S5 plays an important role in translational accuracy. Interacts with and stabilizes bases of the 16S rRNA that are involved in tRNA selection in the A site and with the mRNA backbone. Located at the interface of the 30S and 50S subunits, it traverses the body of the 30S subunit contacting proteins on the other side and probably holding the rRNA structure together. The combined cluster of proteins S8, S12 and S17 appears to hold together the shoulder and platform of the 30S subunit. This is Small ribosomal subunit protein uS12 from Paracoccus denitrificans (strain Pd 1222).